Consider the following 265-residue polypeptide: Undecaprenyl-diphosphatase (265 aa).

Transmembrane regions (helical) follow at residues serine 38–tryptophan 58, leucine 80–glutamate 100, proline 107–alanine 127, isoleucine 135–glycine 155, threonine 178–leucine 198, isoleucine 216–isoleucine 236, and phenylalanine 244–isoleucine 264.

It belongs to the UppP family.

Its subcellular location is the cell inner membrane. The catalysed reaction is di-trans,octa-cis-undecaprenyl diphosphate + H2O = di-trans,octa-cis-undecaprenyl phosphate + phosphate + H(+). Catalyzes the dephosphorylation of undecaprenyl diphosphate (UPP). Confers resistance to bacitracin. This is Undecaprenyl-diphosphatase from Rhizobium johnstonii (strain DSM 114642 / LMG 32736 / 3841) (Rhizobium leguminosarum bv. viciae).